A 506-amino-acid polypeptide reads, in one-letter code: MPATSMEELVSLCKRRGFIFQGSEIYGGLQGFYDYGPLGVELKNNIKAAWWRSNVYERDDMEGLDASIIMHRMVLRHSGHEATFSDPMIDNKKNNKRYRLDHLLKDQKADVQAKVAEIMGESADNFAALVAALNAKPAQASAAFKEAGVRDPFSGEVGEWTDPKPFNMMFRTTIGPVADEESYGYLRPETAQGIFTNFKNVVDSTSRRLPFGIAQIGKAFRNEITPRNFIFRVRELEQMEIEFFVTPGTDEEWHEHWLEKRLKWWEDQGVPREKIEILDVPKEDLAHYSKRTYDLMYDYPTLGHEEIEGIANRSDYDLGSHTKSQSELGLVAKVEENNDSIAKLTIPHPETNKPVVPFVIEPSAGVDRAMLAVLSEAFTKETLENGNERIVLKLKPHLAPIKVAVIPLARNREEITDVAKAIKAELQGLGLGRVLYEDSGNIGKAYRRHDEVGTPYCVTVDFDTVGLGENTDESLKDTVTVRDRDTLAQERVKISELAGWIQAKLR.

Arg99 and Glu189 together coordinate substrate. ATP is bound by residues 221-223 (RNE), 231-236 (FRVREL), 306-307 (EI), and 365-368 (GVDR). 236–240 (LEQME) lines the substrate pocket. 361–365 (EPSAG) contributes to the substrate binding site.

It belongs to the class-II aminoacyl-tRNA synthetase family. Homodimer.

It localises to the cytoplasm. The catalysed reaction is tRNA(Gly) + glycine + ATP = glycyl-tRNA(Gly) + AMP + diphosphate. Catalyzes the attachment of glycine to tRNA(Gly). The polypeptide is Glycine--tRNA ligase (Deinococcus radiodurans (strain ATCC 13939 / DSM 20539 / JCM 16871 / CCUG 27074 / LMG 4051 / NBRC 15346 / NCIMB 9279 / VKM B-1422 / R1)).